A 236-amino-acid chain; its full sequence is Chaperone protein TorD (236 aa).

The protein belongs to the TorD/DmsD family. TorD subfamily.

The protein localises to the cytoplasm. Functionally, involved in the biogenesis of TorA. Acts on TorA before the insertion of the molybdenum cofactor and, as a result, probably favors a conformation of the apoenzyme that is competent for acquiring the cofactor. The polypeptide is Chaperone protein TorD (Colwellia psychrerythraea (strain 34H / ATCC BAA-681) (Vibrio psychroerythus)).